Reading from the N-terminus, the 360-residue chain is Membrane-bound lytic murein transglycosylase C (360 aa).

The signal sequence occupies residues 1–16 (MKKIFALALIAPLLIS). Residue Cys-17 is the site of N-palmitoyl cysteine attachment. Cys-17 is lipidated: S-diacylglycerol cysteine.

Belongs to the transglycosylase Slt family.

The protein localises to the cell outer membrane. The enzyme catalyses Exolytic cleavage of the (1-&gt;4)-beta-glycosidic linkage between N-acetylmuramic acid (MurNAc) and N-acetylglucosamine (GlcNAc) residues in peptidoglycan, from either the reducing or the non-reducing ends of the peptidoglycan chains, with concomitant formation of a 1,6-anhydrobond in the MurNAc residue.. Murein-degrading enzyme. May play a role in recycling of muropeptides during cell elongation and/or cell division. This is Membrane-bound lytic murein transglycosylase C from Cronobacter sakazakii (strain ATCC BAA-894) (Enterobacter sakazakii).